Here is a 204-residue protein sequence, read N- to C-terminus: Ribonuclease HII (204 aa).

One can recognise an RNase H type-2 domain in the interval 1-197 (MILGIDEAGR…KNCILNPKLL (197 aa)). The a divalent metal cation site is built by aspartate 6, glutamate 7, and aspartate 103.

This sequence belongs to the RNase HII family. Requires Mn(2+) as cofactor. The cofactor is Mg(2+).

The protein resides in the cytoplasm. It catalyses the reaction Endonucleolytic cleavage to 5'-phosphomonoester.. In terms of biological role, endonuclease that specifically degrades the RNA of RNA-DNA hybrids. This Helicobacter pylori (strain P12) protein is Ribonuclease HII.